We begin with the raw amino-acid sequence, 358 residues long: Snurportin-1 (358 aa).

An N-acetylmethionine modification is found at Met-1. Disordered stretches follow at residues 1–26 (MEEL…APHP) and 69–90 (DWTG…MDID). Positions 1–65 (MEELSQALAS…LDYVNHARRL (65 aa)) are necessary for interaction with KPNB1 and m3G-cap U1 and U5 snRNP import receptor activity. The segment at 1–160 (MEELSQALAS…NRFSSLLPGG (160 aa)) is necessary for interaction with XPO1. The segment covering 7 to 22 (ALASSFSVSQELNSTA) has biased composition (polar residues). The IBB domain maps to 11 to 73 (SFSVSQELNS…RLAEDDWTGM (63 aa)). The residue at position 75 (Ser-75) is a Phosphoserine. The interaction with m3G-cap structure stretch occupies residues 128–130 (GKR). The interval 210-329 (MHSKLPEEEG…DTKEKLTHKA (120 aa)) is necessary for binding to the m3G-cap structure. A compositionally biased stretch (basic and acidic residues) spans 315-341 (KRSQEDTKEKLTHKASENGHYELEHLS). Residues 315 to 358 (KRSQEDTKEKLTHKASENGHYELEHLSTPKLRNPPHSSESLMDN) are disordered. Residues 349–358 (PHSSESLMDN) show a composition bias toward polar residues. The residue at position 351 (Ser-351) is a Phosphoserine.

It belongs to the snurportin family. Component of an import snRNP complex composed of KPNB1, SNUPN, SMN1 and ZNF259. Component of a nuclear export receptor complex composed of KPNB1, Ran, SNUPN and XPO1. Found in a trimeric export complex with SNUPN, Ran and XPO1. Interacts (via IBB domain) with KPNB1; the interaction is direct. Interacts with DDX20, IPO7, SMN1, SNRPB and XPO1. Interacts directly with XPO1. Its interaction with XPO1 and binding to m3G-cap U snRNPs appears to be mutually exclusive. Can form homomers.

Its subcellular location is the nucleus. The protein localises to the cytoplasm. Functionally, functions as an U snRNP-specific nuclear import adapter. Involved in the trimethylguanosine (m3G)-cap-dependent nuclear import of U snRNPs. Binds specifically to the terminal m3G-cap U snRNAs. The sequence is that of Snurportin-1 (Snupn) from Mus musculus (Mouse).